A 298-amino-acid polypeptide reads, in one-letter code: ATP synthase gamma chain (298 aa).

It belongs to the ATPase gamma chain family. In terms of assembly, F-type ATPases have 2 components, CF(1) - the catalytic core - and CF(0) - the membrane proton channel. CF(1) has five subunits: alpha(3), beta(3), gamma(1), delta(1), epsilon(1). CF(0) has three main subunits: a, b and c.

It localises to the cell inner membrane. Functionally, produces ATP from ADP in the presence of a proton gradient across the membrane. The gamma chain is believed to be important in regulating ATPase activity and the flow of protons through the CF(0) complex. This Wolinella succinogenes (strain ATCC 29543 / DSM 1740 / CCUG 13145 / JCM 31913 / LMG 7466 / NCTC 11488 / FDC 602W) (Vibrio succinogenes) protein is ATP synthase gamma chain.